Reading from the N-terminus, the 523-residue chain is Maintenance of mitochondrial morphology protein 1 (523 aa).

Residues 1-43 (MAGSTSASLQTPYFPSSTQINPVRVDHTLPLPPAQPSLSFTQG) are Lumenal-facing. Residues 44–64 (LLVGQLSVVLLIGAFIKFFIF) traverse the membrane as a helical segment. Residues 65–523 (GEAPPPPSRG…GSMPDTVTET (459 aa)) lie on the Cytoplasmic side of the membrane. Disordered stretches follow at residues 70 to 118 (PPSR…SSST), 295 to 349 (TSDQ…SKHG), 420 to 473 (RTGL…IDRG), and 492 to 523 (GGHQ…VTET). 3 stretches are compositionally biased toward polar residues: residues 74-96 (GLSN…TDSS), 105-118 (STSN…SSST), and 295-312 (TSDQ…TTSE). The region spanning 151 to 412 (QPESLDWFNV…EPRVQVVGLP (262 aa)) is the SMP-LTD domain. A compositionally biased stretch (gly residues) spans 449–467 (GVSGGGGSGGGSGGGGGSM).

It belongs to the MMM1 family. As to quaternary structure, homodimer. Component of the ER-mitochondria encounter structure (ERMES) or MDM complex, composed of MMM1, MDM10, MDM12 and MDM34. An MMM1 homodimer associates with one molecule of MDM12 on each side in a pairwise head-to-tail manner, and the SMP-LTD domains of MMM1 and MDM12 generate a continuous hydrophobic tunnel for phospholipid trafficking.

The protein localises to the endoplasmic reticulum membrane. In terms of biological role, component of the ERMES/MDM complex, which serves as a molecular tether to connect the endoplasmic reticulum (ER) and mitochondria. Components of this complex are involved in the control of mitochondrial shape and protein biogenesis, and function in nonvesicular lipid trafficking between the ER and mitochondria. The MDM12-MMM1 subcomplex functions in the major beta-barrel assembly pathway that is responsible for biogenesis of all outer membrane beta-barrel proteins, and acts in a late step after the SAM complex. The MDM10-MDM12-MMM1 subcomplex further acts in the TOM40-specific pathway after the action of the MDM12-MMM1 complex. Essential for establishing and maintaining the structure of mitochondria and maintenance of mtDNA nucleoids. In Paracoccidioides brasiliensis (strain Pb03), this protein is Maintenance of mitochondrial morphology protein 1.